The primary structure comprises 453 residues: Autophagy-related protein 21 (453 aa).

A WD 1 repeat occupies 4-137 (LRFNQDASCC…NDQIFIYDIS (134 aa)). Positions 177-207 (GNELDRIRSKSNNNNDQTNSDNGRSRTYSIN) are disordered. Residues 187 to 198 (SNNNNDQTNSDN) are compositionally biased toward low complexity. 2 WD repeats span residues 252–347 (NLKP…RTDD) and 419–453 (FDNK…SHFI). Residues 310–314 (FRRGS) carry the L/FRRG motif motif.

The protein belongs to the WD repeat PROPPIN family.

It localises to the cytoplasm. The protein resides in the membrane. Its subcellular location is the vacuole membrane. In terms of biological role, required for cytoplasm to vacuole transport (Cvt) vesicles formation and mitophagy. Involved in binding of phosphatidylethanolamine to ATG8 and in recruitment of ATG8 and ATG5 to the pre-autophagosomal structure. Protects ATG8 from ARG4-mediated cleavage. This Candida glabrata (strain ATCC 2001 / BCRC 20586 / JCM 3761 / NBRC 0622 / NRRL Y-65 / CBS 138) (Yeast) protein is Autophagy-related protein 21 (ATG21).